Consider the following 165-residue polypeptide: UPF0303 protein ACP_1015 (165 aa).

This sequence belongs to the UPF0303 family.

This is UPF0303 protein ACP_1015 from Acidobacterium capsulatum (strain ATCC 51196 / DSM 11244 / BCRC 80197 / JCM 7670 / NBRC 15755 / NCIMB 13165 / 161).